Consider the following 399-residue polypeptide: S-adenosylmethionine synthase (399 aa).

Histidine 17 lines the ATP pocket. A Mg(2+)-binding site is contributed by aspartate 19. Glutamate 45 lines the K(+) pocket. Residues glutamate 58 and glutamine 101 each coordinate L-methionine. Residues glutamine 101–glutamate 111 form a flexible loop region. ATP-binding positions include aspartate 177–lysine 179, arginine 244–phenylalanine 245, aspartate 253, arginine 259–lysine 260, alanine 276, and lysine 280. Aspartate 253 is an L-methionine binding site. Residue lysine 284 participates in L-methionine binding.

Belongs to the AdoMet synthase family. Homotetramer; dimer of dimers. The cofactor is Mg(2+). Requires K(+) as cofactor.

The protein resides in the cytoplasm. The catalysed reaction is L-methionine + ATP + H2O = S-adenosyl-L-methionine + phosphate + diphosphate. Its pathway is amino-acid biosynthesis; S-adenosyl-L-methionine biosynthesis; S-adenosyl-L-methionine from L-methionine: step 1/1. Catalyzes the formation of S-adenosylmethionine (AdoMet) from methionine and ATP. The overall synthetic reaction is composed of two sequential steps, AdoMet formation and the subsequent tripolyphosphate hydrolysis which occurs prior to release of AdoMet from the enzyme. In Listeria innocua serovar 6a (strain ATCC BAA-680 / CLIP 11262), this protein is S-adenosylmethionine synthase.